The following is a 249-amino-acid chain: 3alpha-hydroxy bile acid-CoA-ester 3-dehydrogenase 1/3 (249 aa).

NAD(+) is bound by residues 15–18 (TRGI), Glu-38, Glu-42, and Asn-92. Ser-144 contacts substrate. Residues Tyr-157 and Lys-161 each act as proton donor/acceptor in the active site. NAD(+) is bound by residues Lys-161 and 190–192 (VDT).

This sequence belongs to the short-chain dehydrogenases/reductases (SDR) family. As to quaternary structure, homotetramer.

The catalysed reaction is a 3alpha-hydroxy bile acid CoA + NAD(+) = a 3-oxo bile acid CoA + NADH + H(+). It carries out the reaction choloyl-CoA + NAD(+) = 7alpha,12alpha-dihydroxy-3-oxochol-24-oyl-CoA + NADH + H(+). The enzyme catalyses chenodeoxycholoyl-CoA + NAD(+) = 7alpha-hydroxy-3-oxochol-24-oyl-CoA + NADH + H(+). It catalyses the reaction deoxycholoyl-CoA + NAD(+) = 12alpha-hydroxy-3-oxocholan-24-oyl-CoA + NADH + H(+). The catalysed reaction is lithocholoyl-CoA + NAD(+) = 3-oxocholan-24-oyl-CoA + NADH + H(+). Its pathway is lipid metabolism; bile acid biosynthesis. Involved in the multi-step bile acid 7alpha-dehydroxylation pathway that transforms primary bile acids to secondary bile acids in the human gut. Catalyzes the oxidation of C3-hydroxyl group of CoA conjugated bile acids generating a C3-oxo bile acid intermediate. Can use choloyl-CoA, chenodeoxycholoyl-CoA, deoxycholoyl-CoA, and lithocholoyl-CoA as substrates with similar efficiency. Highly prefers NAD over NADP as cosubstrate. Also catalyzes the reverse reactions; in vitro, the preferred direction of reaction depends on the pH. Has very little activity with unconjugated (non-CoA) bile acid substrates. In Clostridium scindens (strain JCM 10418 / VPI 12708), this protein is 3alpha-hydroxy bile acid-CoA-ester 3-dehydrogenase 1/3 (baiA1).